We begin with the raw amino-acid sequence, 128 residues long: Small ribosomal subunit protein uS12 (128 aa).

The segment at 1–29 (MPTINQLIRKGREPKERKSKSPALMGNPQ) is disordered. Position 89 is a 3-methylthioaspartic acid (Asp89). The disordered stretch occupies residues 106-128 (GVEGRRQGRSKYGAKRPKEGGKK).

Belongs to the universal ribosomal protein uS12 family. Part of the 30S ribosomal subunit. Contacts proteins S8 and S17. May interact with IF1 in the 30S initiation complex.

Functionally, with S4 and S5 plays an important role in translational accuracy. Interacts with and stabilizes bases of the 16S rRNA that are involved in tRNA selection in the A site and with the mRNA backbone. Located at the interface of the 30S and 50S subunits, it traverses the body of the 30S subunit contacting proteins on the other side and probably holding the rRNA structure together. The combined cluster of proteins S8, S12 and S17 appears to hold together the shoulder and platform of the 30S subunit. This is Small ribosomal subunit protein uS12 from Dictyoglomus turgidum (strain DSM 6724 / Z-1310).